A 281-amino-acid polypeptide reads, in one-letter code: Bifunctional protein FolD (281 aa).

NADP(+) contacts are provided by residues 165–167 (GRG), T192, and V233.

The protein belongs to the tetrahydrofolate dehydrogenase/cyclohydrolase family. As to quaternary structure, homodimer.

The enzyme catalyses (6R)-5,10-methylene-5,6,7,8-tetrahydrofolate + NADP(+) = (6R)-5,10-methenyltetrahydrofolate + NADPH. It carries out the reaction (6R)-5,10-methenyltetrahydrofolate + H2O = (6R)-10-formyltetrahydrofolate + H(+). It functions in the pathway one-carbon metabolism; tetrahydrofolate interconversion. Its function is as follows. Catalyzes the oxidation of 5,10-methylenetetrahydrofolate to 5,10-methenyltetrahydrofolate and then the hydrolysis of 5,10-methenyltetrahydrofolate to 10-formyltetrahydrofolate. This is Bifunctional protein FolD from Mycobacterium bovis (strain BCG / Tokyo 172 / ATCC 35737 / TMC 1019).